The following is a 199-amino-acid chain: FMN-dependent NADH:quinone oxidoreductase (199 aa).

FMN contacts are provided by residues Ser9, 15–17 (SNS), and 95–98 (MYNF).

This sequence belongs to the azoreductase type 1 family. In terms of assembly, homodimer. FMN is required as a cofactor.

It catalyses the reaction 2 a quinone + NADH + H(+) = 2 a 1,4-benzosemiquinone + NAD(+). The enzyme catalyses N,N-dimethyl-1,4-phenylenediamine + anthranilate + 2 NAD(+) = 2-(4-dimethylaminophenyl)diazenylbenzoate + 2 NADH + 2 H(+). Quinone reductase that provides resistance to thiol-specific stress caused by electrophilic quinones. Functionally, also exhibits azoreductase activity. Catalyzes the reductive cleavage of the azo bond in aromatic azo compounds to the corresponding amines. This chain is FMN-dependent NADH:quinone oxidoreductase, found in Aromatoleum aromaticum (strain DSM 19018 / LMG 30748 / EbN1) (Azoarcus sp. (strain EbN1)).